A 142-amino-acid chain; its full sequence is ATP synthase epsilon chain (142 aa).

The protein belongs to the ATPase epsilon chain family. In terms of assembly, F-type ATPases have 2 components, CF(1) - the catalytic core - and CF(0) - the membrane proton channel. CF(1) has five subunits: alpha(3), beta(3), gamma(1), delta(1), epsilon(1). CF(0) has three main subunits: a, b and c.

The protein localises to the cell inner membrane. In terms of biological role, produces ATP from ADP in the presence of a proton gradient across the membrane. The protein is ATP synthase epsilon chain of Shewanella frigidimarina (strain NCIMB 400).